Reading from the N-terminus, the 182-residue chain is Isopentenyl-diphosphate Delta-isomerase (182 aa).

Residues His25 and His32 each coordinate Mn(2+). The 135-residue stretch at 30 to 164 folds into the Nudix hydrolase domain; the sequence is RLHLAFSSWL…PWAFSPWMVM (135 aa). Cys67 is a catalytic residue. Cys67 provides a ligand contact to Mg(2+). Position 69 (His69) interacts with Mn(2+). Glu87 provides a ligand contact to Mg(2+). Residues Glu114 and Glu116 each contribute to the Mn(2+) site. Glu116 is a catalytic residue.

It belongs to the IPP isomerase type 1 family. As to quaternary structure, homodimer. It depends on Mg(2+) as a cofactor. Requires Mn(2+) as cofactor.

The protein localises to the cytoplasm. The enzyme catalyses isopentenyl diphosphate = dimethylallyl diphosphate. It functions in the pathway isoprenoid biosynthesis; dimethylallyl diphosphate biosynthesis; dimethylallyl diphosphate from isopentenyl diphosphate: step 1/1. In terms of biological role, catalyzes the 1,3-allylic rearrangement of the homoallylic substrate isopentenyl (IPP) to its highly electrophilic allylic isomer, dimethylallyl diphosphate (DMAPP). In Shigella dysenteriae serotype 1 (strain Sd197), this protein is Isopentenyl-diphosphate Delta-isomerase.